A 357-amino-acid chain; its full sequence is Holliday junction branch migration complex subunit RuvB (357 aa).

A disordered region spans residues 1–27 (MGRFSNADGPGDDADEREVTPALTVGE). Positions 1–195 (MGRFSNADGP…FGFTAHMDFY (195 aa)) are large ATPase domain (RuvB-L). ATP-binding positions include L34, R35, G76, K79, T80, S81, 142 to 144 (EDF), R185, Y195, and R232. T80 lines the Mg(2+) pocket. Residues 196-266 (EPAELERVLA…IAKYALEVYD (71 aa)) are small ATPAse domain (RuvB-S). Positions 269–357 (ELGLDRLDRA…GGLGQVGLFE (89 aa)) are head domain (RuvB-H). DNA is bound by residues R324 and R329.

It belongs to the RuvB family. As to quaternary structure, homohexamer. Forms an RuvA(8)-RuvB(12)-Holliday junction (HJ) complex. HJ DNA is sandwiched between 2 RuvA tetramers; dsDNA enters through RuvA and exits via RuvB. An RuvB hexamer assembles on each DNA strand where it exits the tetramer. Each RuvB hexamer is contacted by two RuvA subunits (via domain III) on 2 adjacent RuvB subunits; this complex drives branch migration. In the full resolvosome a probable DNA-RuvA(4)-RuvB(12)-RuvC(2) complex forms which resolves the HJ.

It is found in the cytoplasm. It catalyses the reaction ATP + H2O = ADP + phosphate + H(+). Functionally, the RuvA-RuvB-RuvC complex processes Holliday junction (HJ) DNA during genetic recombination and DNA repair, while the RuvA-RuvB complex plays an important role in the rescue of blocked DNA replication forks via replication fork reversal (RFR). RuvA specifically binds to HJ cruciform DNA, conferring on it an open structure. The RuvB hexamer acts as an ATP-dependent pump, pulling dsDNA into and through the RuvAB complex. RuvB forms 2 homohexamers on either side of HJ DNA bound by 1 or 2 RuvA tetramers; 4 subunits per hexamer contact DNA at a time. Coordinated motions by a converter formed by DNA-disengaged RuvB subunits stimulates ATP hydrolysis and nucleotide exchange. Immobilization of the converter enables RuvB to convert the ATP-contained energy into a lever motion, pulling 2 nucleotides of DNA out of the RuvA tetramer per ATP hydrolyzed, thus driving DNA branch migration. The RuvB motors rotate together with the DNA substrate, which together with the progressing nucleotide cycle form the mechanistic basis for DNA recombination by continuous HJ branch migration. Branch migration allows RuvC to scan DNA until it finds its consensus sequence, where it cleaves and resolves cruciform DNA. The protein is Holliday junction branch migration complex subunit RuvB of Mycolicibacterium gilvum (strain PYR-GCK) (Mycobacterium gilvum (strain PYR-GCK)).